The primary structure comprises 1035 residues: MYSKLMFFFALCSISFLFTSEAASTMLLESSYLPLNQSYAPGFLYKRDMLPPPLQAVLTYTCPEPRPLAEESYNDLLRAISQKSSSDFQNAYSLALSFSSDFYQHGLKTLKDVSFLAVEKFLWGLTRLWSSLILASFSALWWLVSNFTTPVFCLALLYTVTKYMVKTVSFLFGGLPIWIISIAFSLLKKSFSALRSTPKCLYEKAIDGFKSFTIPQSPPKSCVIPITHASGNHAGYASCIKLYNGENALMTATHVLRDCPNAVAVSAKGLKTRIPLAEFKTIAKSDKGDVTLLRGPPNWEGLLGCKAANVITAANLAKCKASIYSFDRDGWVSSYAEIVGSEGTDVMVLSHTEGGHSGSPYFNGKTILGVHSGASATGNYNLMAPIPSLPGLTSPTYVFETTAPQGRVFAQEDIAEIEGLYAQVMKRVQQAEDFKPKTGKYWGDMEDDEDIFFESKEDLSGKRSARHRPRNKRRRQLHPKDKQRRWERDDGENNLISSGKDKSREHREESDRGDLRESDENSEIPPQKSPKETAGEFERYFSSLYNWEVPTSPREVPGFRHCGKLPQYYHPKQKEESSWGKTLVGNHPALGEKTSGFGWPKFGPEAELKSLRLQASRWLERAQSAEIPSDAERERVIQKTADVYHPCQTNGPAATRGGTLTWNNFMIDFKQAVFSLEFDAGIELPYIAYGKPTHRGWVEDQKLLPILAQLTFFRLQKMLEVNFEDMGPEELVRNGLCDPIRLFVKGEPHKQAKLDEGRYRLIMSVSLVDQLVARVLFQNQNKREIALWRAIPSKPGFGLSTDEQVLDFVESLARQVGTTTTEVVANWKNYLTPTDCSGFDWSVADWMLHDDMIVRNRLTIDLNPATERLRSCWLRCISNSVLCLSDGTLLAQIHPGVQKSGSYNTSSSNSRIRVMAAFHTGAIWAMAMGDDALESNPADLAAYKKLGFKVEVSGQLEFCSHIFRAPDLALPVNENKMIYKLIYGYNPGSGNAEVVSNYLAACFSVLNELRHDPASVELLYSWLVDPVLPQKIPGE.

The N-terminal stretch at 1–22 (MYSKLMFFFALCSISFLFTSEA) is a signal peptide. 3 helical membrane-spanning segments follow: residues 115 to 135 (FLAV…LILA), 137 to 157 (FSAL…LALL), and 167 to 187 (TVSF…FSLL). Positions 206 to 400 (IDGFKSFTIP…GLTSPTYVFE (195 aa)) constitute a Peptidase S39 domain. Active-site for protease activity residues include histidine 254, aspartate 289, and serine 357. A disordered region spans residues 455–534 (SKEDLSGKRS…PPQKSPKETA (80 aa)). Over residues 463-477 (RSARHRPRNKRRRQL) the composition is skewed to basic residues. 2 stretches are compositionally biased toward basic and acidic residues: residues 478-488 (HPKDKQRRWER) and 499-519 (GKDK…RESD). The RdRp catalytic domain occupies 829-944 (NYLTPTDCSG…SNPADLAAYK (116 aa)).

In terms of processing, specific enzymatic cleavages in vivo yield mature proteins. The protease probably cleaves itself and releases the RdRp (Potential). Cleavages have been shown in the P1 protein, but since the N-terminus containing the serine protease is shared between P1 and P1-P2, cleavages should also occur within the P1-P2 protein.

It localises to the membrane. The enzyme catalyses RNA(n) + a ribonucleoside 5'-triphosphate = RNA(n+1) + diphosphate. Its function is as follows. Precursor from which the RNA-dependent RNA polymerase (RdRp) is probably released. RNA-dependent RNA polymerase plays an essential role in virus replication (Potential). The polypeptide is Protein P1-P2 (Turnip yellows virus (isolate FL-1) (TuYV)).